A 314-amino-acid chain; its full sequence is Inactive chitinase-like protein 1 (314 aa).

An N-terminal signal peptide occupies residues 1–19 (MKEIVRALEGYGPPKDKAA). The region spanning 20 to 60 (EQCGWQAGGALCPGGLCCSQYGWCANTPEYCGSGCQSQCDG) is the Chitin-binding type-1 domain. Cystine bridges form between Cys22–Cys37, Cys31–Cys43, Cys36–Cys50, Cys54–Cys58, Cys92–Cys154, Cys166–Cys174, and Cys273–Cys305.

Belongs to the glycosyl hydrolase 19 family. Chitinase class I subfamily.

In terms of biological role, inactive chitinase-like protein that does not exhibit hydrolytic activity toward chitin. Binds strongly to chitin and possesses antifungal activity toward the fungal pathogen Altenaria alternata in plate assays. Inhibits the growth of Fusarium oxysporum on plate assays. Probably involved in defense against fungal pathogens through a mechanism that only involves carbohydrate binding. This is Inactive chitinase-like protein 1 from Hevea brasiliensis (Para rubber tree).